The sequence spans 399 residues: Exodeoxyribonuclease 7 large subunit (399 aa).

Belongs to the XseA family. In terms of assembly, heterooligomer composed of large and small subunits.

The protein resides in the cytoplasm. The enzyme catalyses Exonucleolytic cleavage in either 5'- to 3'- or 3'- to 5'-direction to yield nucleoside 5'-phosphates.. Functionally, bidirectionally degrades single-stranded DNA into large acid-insoluble oligonucleotides, which are then degraded further into small acid-soluble oligonucleotides. In Clostridium botulinum (strain Eklund 17B / Type B), this protein is Exodeoxyribonuclease 7 large subunit.